The chain runs to 494 residues: Monocarboxylate transporter 1 (494 aa).

The Cytoplasmic portion of the chain corresponds to 1–22 (MPPAIGGPVGYTPPDGGWGWAV). A helical transmembrane segment spans residues 23–44 (VVGAFISIGFSYAFPKSITVFF). Residue Lys-38 coordinates (S)-lactate. Over 45–55 (KEIEIIFSATT) the chain is Extracellular. A helical transmembrane segment spans residues 56 to 80 (SEVSWISSIMLAVMYAGGPISSILV). The Cytoplasmic segment spans residues 81–84 (NKYG). The chain crosses the membrane as a helical span at residues 85–105 (SRPVMIAGGCLSGCGLIAASF). The Extracellular segment spans residues 106-109 (CNTV). The chain crosses the membrane as a helical span at residues 110–132 (QELYFCIGVIGGLGLAFNLNPAL). Residues 133 to 146 (TMIGKYFYKKRPLA) lie on the Cytoplasmic side of the membrane. Residues 147–169 (NGLAMAGSPVFLSTLAPLNQAFF) traverse the membrane as a helical segment. The Extracellular portion of the chain corresponds to 170-174 (GIFGW). A helical transmembrane segment spans residues 175-194 (RGSFLILGGLLLNCCVAGSL). Topologically, residues 195-254 (MRPIGPQQGKVEKLKSKESLQEAGKSDANTDLIGGSPKGEKLSVFQTVNKFLDLSLFTHR) are cytoplasmic. Phosphoserine is present on residues Ser-210, Ser-213, and Ser-220. Thr-224 is modified (phosphothreonine). Residue Ser-230 is modified to Phosphoserine. A helical transmembrane segment spans residues 255–281 (GFLLYLSGNVVMFFGLFTPLVFLSNYG). Topologically, residues 282–288 (KSKHFSS) are extracellular. Residues 289–310 (EKSAFLLSILAFVDMVARPSMG) form a helical membrane-spanning segment. Asp-302 lines the H(+) pocket. Position 306 (Arg-306) interacts with (S)-lactate. The Cytoplasmic segment spans residues 311–321 (LAANTRWIRPR). A helical transmembrane segment spans residues 322–342 (VQYFFAASVVANGVCHLLAPL). Topologically, residues 343–346 (STTY) are extracellular. The helical transmembrane segment at 347–368 (VGFCIYAGVFGFAFGWLSSVLF) threads the bilayer. The Cytoplasmic segment spans residues 369 to 382 (ETLMDLVGPQRFSS). A helical membrane pass occupies residues 383–403 (AVGLVTIVECCPVLLGPPLLG). Residues 404-414 (RLNDMYGDYKY) are Extracellular-facing. Residues 415–436 (TYWACGVILIIAGLYLFIGMGI) form a helical membrane-spanning segment. Over 437–494 (NYRLVAKEQKAEEKKRDGKEDETSTDVDEKPKKTMKETQSPAPLQNSSGDPAEEESPV) the chain is Cytoplasmic. A compositionally biased stretch (basic and acidic residues) spans 446–472 (KAEEKKRDGKEDETSTDVDEKPKKTMK). A disordered region spans residues 446 to 494 (KAEEKKRDGKEDETSTDVDEKPKKTMKETQSPAPLQNSSGDPAEEESPV). Residue Thr-459 is modified to Phosphothreonine. Ser-460 carries the post-translational modification Phosphoserine. Residue Thr-461 is modified to Phosphothreonine. Residues 473–485 (ETQSPAPLQNSSG) show a composition bias toward polar residues. Ser-476, Ser-483, Ser-484, and Ser-492 each carry phosphoserine.

Belongs to the major facilitator superfamily. Monocarboxylate porter (TC 2.A.1.13) family. In terms of assembly, interacts with BSG. Interacts with EMB. Interaction with either BSG or EMB is required for expression at the cell membrane. Detected in erythrocytes (at protein level). Detected in brain, heart, kidney, lung, muscle, jejunum enterocytes and brain capillaries.

The protein localises to the cell membrane. Its subcellular location is the basolateral cell membrane. The protein resides in the apical cell membrane. The enzyme catalyses (S)-lactate(in) + H(+)(in) = (S)-lactate(out) + H(+)(out). It carries out the reaction pyruvate(out) + H(+)(out) = pyruvate(in) + H(+)(in). The catalysed reaction is acetoacetate(out) + H(+)(out) = acetoacetate(in) + H(+)(in). It catalyses the reaction (S)-3-hydroxybutanoate(out) + H(+)(out) = (S)-3-hydroxybutanoate(in) + H(+)(in). The enzyme catalyses (R)-3-hydroxybutanoate(out) + H(+)(out) = (R)-3-hydroxybutanoate(in) + H(+)(in). It carries out the reaction 3-methyl-2-oxobutanoate(out) + H(+)(out) = 3-methyl-2-oxobutanoate(in) + H(+)(in). The catalysed reaction is 4-methyl-2-oxopentanoate(out) + H(+)(out) = 4-methyl-2-oxopentanoate(in) + H(+)(in). Its activity is regulated as follows. Inhibited by stilbene disulfonates, such as di-isothiocyanostilbene disulfonate(DIDS), a cross-linking reagent that forms covalent linkages with lysine groups. In terms of biological role, bidirectional proton-coupled monocarboxylate transporter. Catalyzes the rapid transport across the plasma membrane of many monocarboxylates such as lactate, pyruvate, acetate and the ketone bodies acetoacetate and beta-hydroxybutyrate, and thus contributes to the maintenance of intracellular pH. The transport direction is determined by the proton motive force and the concentration gradient of the substrate monocarboxylate. MCT1 is a major lactate exporter. Plays a role in cellular responses to a high-fat diet by modulating the cellular levels of lactate and pyruvate that contribute to the regulation of central metabolic pathways and insulin secretion, with concomitant effects on plasma insulin levels and blood glucose homeostasis. Facilitates the protonated monocarboxylate form of succinate export, that its transient protonation upon muscle cell acidification in exercising muscle and ischemic heart. Functions via alternate outward- and inward-open conformation states. Protonation and deprotonation of 302-Asp is essential for the conformational transition. The chain is Monocarboxylate transporter 1 (Slc16a1) from Rattus norvegicus (Rat).